The chain runs to 121 residues: Spermidine export protein MdtJ (121 aa).

A run of 4 helical transmembrane segments spans residues 1 to 21 (MYIYWILLGLAIATEITGTLS), 32 to 52 (GGFILMLVMISLSYIFLSFAV), 55 to 75 (IALGVAYALWEGIGILFITLF), and 82 to 102 (ESLSLMKIAGLTTLVAGIVLI).

This sequence belongs to the drug/metabolite transporter (DMT) superfamily. Small multidrug resistance (SMR) (TC 2.A.7.1) family. MdtJ subfamily. As to quaternary structure, forms a complex with MdtI.

The protein localises to the cell inner membrane. Its function is as follows. Catalyzes the excretion of spermidine. The polypeptide is Spermidine export protein MdtJ (Escherichia coli O127:H6 (strain E2348/69 / EPEC)).